A 688-amino-acid polypeptide reads, in one-letter code: ATP-dependent zinc metalloprotease FTSH 6, chloroplastic (688 aa).

The transit peptide at 1 to 75 (MKMASSSSAL…GFTSALGTVL (75 aa)) directs the protein to the chloroplast. A compositionally biased stretch (polar residues) spans 25–36 (QQFQKPASLSKS). Residues 25 to 44 (QQFQKPASLSKSSHTHKPSL) form a disordered region. The transit peptide at 76 to 83 (AHPAKAEP) directs the protein to the thylakoid. Residues 84-168 (EAPIEATSNR…AHPMNVNWGA (85 aa)) are Lumenal, thylakoid-facing. A helical transmembrane segment spans residues 169–189 (FLLNFLGNLGFPLILLVSLLL). The Stromal segment spans residues 190-688 (TSSSRRNPAG…RIRINDLISV (499 aa)). Position 264-271 (264-271 (GPPGTGKT)) interacts with ATP. His485 is a binding site for Zn(2+). The active site involves Glu486. Residues His489 and Asp563 each contribute to the Zn(2+) site.

In the N-terminal section; belongs to the AAA ATPase family. It in the C-terminal section; belongs to the peptidase M41 family. Zn(2+) serves as cofactor.

The protein localises to the plastid. It localises to the chloroplast thylakoid membrane. In terms of biological role, probable ATP-dependent zinc metallopeptidase. Involved in the degradation of the light-harvesting complex of photosystem II (LHC II) during senescence or high light acclimation. The chain is ATP-dependent zinc metalloprotease FTSH 6, chloroplastic (FTSH6) from Arabidopsis thaliana (Mouse-ear cress).